Consider the following 295-residue polypeptide: Proline iminopeptidase (295 aa).

One can recognise an AB hydrolase-1 domain in the interval 29–279; sequence PLLLLHGGPG…GCGHMPFVQE (251 aa). S107 (nucleophile) is an active-site residue. The active site involves D246. The active-site Proton donor is H273.

The protein belongs to the peptidase S33 family.

The protein localises to the cell envelope. It carries out the reaction Release of N-terminal proline from a peptide.. Its function is as follows. Releases the N-terminal proline from various substrates. The polypeptide is Proline iminopeptidase (Lactobacillus delbrueckii subsp. bulgaricus (strain ATCC 11842 / DSM 20081 / BCRC 10696 / JCM 1002 / NBRC 13953 / NCIMB 11778 / NCTC 12712 / WDCM 00102 / Lb 14)).